The following is a 177-amino-acid chain: Large ribosomal subunit protein uL6 (177 aa).

This sequence belongs to the universal ribosomal protein uL6 family. Part of the 50S ribosomal subunit.

This protein binds to the 23S rRNA, and is important in its secondary structure. It is located near the subunit interface in the base of the L7/L12 stalk, and near the tRNA binding site of the peptidyltransferase center. This is Large ribosomal subunit protein uL6 from Cupriavidus taiwanensis (strain DSM 17343 / BCRC 17206 / CCUG 44338 / CIP 107171 / LMG 19424 / R1) (Ralstonia taiwanensis (strain LMG 19424)).